The chain runs to 525 residues: GMP synthase [glutamine-hydrolyzing] (525 aa).

In terms of domain architecture, Glutamine amidotransferase type-1 spans 9-207 (RILILDFGSQ…VRDICQCEAL (199 aa)). The active-site Nucleophile is the Cys86. Catalysis depends on residues His181 and Glu183. In terms of domain architecture, GMPS ATP-PPase spans 208 to 400 (WTPAKIIDDA…LGLPYNMLYR (193 aa)). 235 to 241 (SGGVDSS) contributes to the ATP binding site.

Homodimer.

The enzyme catalyses XMP + L-glutamine + ATP + H2O = GMP + L-glutamate + AMP + diphosphate + 2 H(+). It functions in the pathway purine metabolism; GMP biosynthesis; GMP from XMP (L-Gln route): step 1/1. Catalyzes the synthesis of GMP from XMP. This Pectobacterium carotovorum subsp. carotovorum (strain PC1) protein is GMP synthase [glutamine-hydrolyzing].